The following is a 400-amino-acid chain: NADH-quinone oxidoreductase subunit D (400 aa).

This sequence belongs to the complex I 49 kDa subunit family. NDH-1 is composed of 14 different subunits. Subunits NuoB, C, D, E, F, and G constitute the peripheral sector of the complex.

The protein localises to the cell inner membrane. The catalysed reaction is a quinone + NADH + 5 H(+)(in) = a quinol + NAD(+) + 4 H(+)(out). In terms of biological role, NDH-1 shuttles electrons from NADH, via FMN and iron-sulfur (Fe-S) centers, to quinones in the respiratory chain. The immediate electron acceptor for the enzyme in this species is believed to be a menaquinone. Couples the redox reaction to proton translocation (for every two electrons transferred, four hydrogen ions are translocated across the cytoplasmic membrane), and thus conserves the redox energy in a proton gradient. The sequence is that of NADH-quinone oxidoreductase subunit D from Chlorobium chlorochromatii (strain CaD3).